The chain runs to 927 residues: Small conductance calcium-activated potassium channel protein (927 aa).

A compositionally biased stretch (polar residues) spans 1–31 (MSIQKLNDTTNSGYVSSEETDSLLVSSSNPS). 3 disordered regions span residues 1 to 131 (MSIQ…EDVE), 181 to 251 (LSLK…VKSA), and 296 to 336 (HLHQ…SSST). Residues 45-62 (SNSTNGPTTGASTSSSGS) are compositionally biased toward low complexity. Residues 63–77 (VSGGGGGSGSGGGSA) show a composition bias toward gly residues. 2 stretches are compositionally biased toward polar residues: residues 95-107 (TSTY…QSQH) and 200-214 (NLGT…SSIP). Low complexity-rich tracts occupy residues 219–232 (SRCR…RRAS) and 296–308 (HLHQ…SQQQ). Over residues 314 to 336 (ITSSPTNGSRIIRQSSQPESSST) the composition is skewed to polar residues. Residues 489–509 (ALVMGMFGIIVMVIENELSSA) form a helical membrane-spanning segment. Residues 530-550 (TVILLGLIVAYHALEVQLFMI) traverse the membrane as a helical segment. A helical membrane pass occupies residues 569–589 (IGLELFICAIHPIPGEYYFQW). The helical transmembrane segment at 609 to 629 (VALSLPMFLRLYLICRVMLLH) threads the bilayer. Residues 658–678 (LMTICPGTVLLVFMVSLWIIA) traverse the membrane as a helical segment. The pore-forming intramembrane region spans 696-716 (LLNSMWLTAITFLCVGYGDIV). Residues 724–744 (GITLTCGMVGAGCTALLVAVV) form a helical membrane-spanning segment. The interval 763–839 (DTQLTKRLKN…ITDMAKTQNT (77 aa)) is calmodulin-binding.

The protein belongs to the potassium channel KCNN family. SK subfamily. As to quaternary structure, heterooligomer. The complex is composed of 4 channel subunits each of which binds to a calmodulin subunit which regulates the channel activity through calcium-binding.

The protein resides in the membrane. In terms of biological role, forms a voltage-independent potassium channel activated by intracellular calcium. Activation is followed by membrane hyperpolarization. Thought to regulate neuronal excitability by contributing to the slow component of synaptic afterhyperpolarization. The channel is blocked by apamin. This Drosophila melanogaster (Fruit fly) protein is Small conductance calcium-activated potassium channel protein.